A 398-amino-acid polypeptide reads, in one-letter code: Cytochrome b (398 aa).

A helical membrane pass occupies residues 45–65 (LGSIAGIALVIQIITGVILAM). The heme b site is built by His-95 and His-109. 9 consecutive transmembrane segments (helical) span residues 96–116 (AVGA…GLYY), 129–149 (IGII…VLPW), 164–184 (FSAI…GFSV), 192–212 (FFAL…LHLV), 245–265 (FVGF…APNY), 277–297 (PLVT…YAIL), 304–324 (LGGV…PWLD), 339–359 (IAFW…SKPV), and 366–386 (ISRF…PLIG). Residues His-196 and His-210 each contribute to the heme b site.

This sequence belongs to the cytochrome b family. In terms of assembly, the main subunits of complex b-c1 are: cytochrome b, cytochrome c1 and the Rieske protein. Heme b serves as cofactor.

Its subcellular location is the cell membrane. Functionally, component of the ubiquinol-cytochrome c reductase complex (complex III or cytochrome b-c1 complex), which is a respiratory chain that generates an electrochemical potential coupled to ATP synthesis. This Rickettsia prowazekii (strain Madrid E) protein is Cytochrome b (petB).